The chain runs to 335 residues: MSRVTLSRYLIEQTRSHNTPADLRFLIEVVARACKAISHQVSKGALGGVLGSLDSENVQGEVQKKLDVISNEILLEANEWGGHLAGMASEEMDNAYQIPGKYPKGAYLLVFDPLDGSSNIDVNVSVGTIFSVLRCPDRNGDTGDLGEDAFLQPGTQQVAAGYAIYGPQTMLMLTLGDGVKGFTLDRELGSFVLTHDNIKVPESTKEFAINMSNQRHWEAPVQRYVSELLAGETGPLGRNYNMRWIASMVADVHRILTRGGVFMYPRDAREPDKPGKLRLMYEANPMSMIIEQAGGAATDGSQRILDIQPTSLHQRVPVFLGSKEEVLRVTAYHRG.

4 residues coordinate Mg(2+): Glu90, Asp112, Leu114, and Asp115. Substrate-binding positions include 115 to 118, Asn210, and Lys276; that span reads DGSS. Mg(2+) is bound at residue Glu282.

It belongs to the FBPase class 1 family. In terms of assembly, homotetramer. The cofactor is Mg(2+).

Its subcellular location is the cytoplasm. The enzyme catalyses beta-D-fructose 1,6-bisphosphate + H2O = beta-D-fructose 6-phosphate + phosphate. Its pathway is carbohydrate biosynthesis; gluconeogenesis. This is Fructose-1,6-bisphosphatase class 1 from Ectopseudomonas mendocina (strain ymp) (Pseudomonas mendocina).